A 507-amino-acid polypeptide reads, in one-letter code: RNA-splicing ligase RtcB homolog (507 aa).

Residues Asp121, Cys124, His229, His261, and His355 each coordinate Mn(2+). 228–232 (NHYAE) contacts GMP. GMP-binding positions include 355–356 (HN), 404–407 (GGTM), Ser411, 430–433 (HGAG), and Lys506. The active-site GMP-histidine intermediate is His430.

It belongs to the RtcB family. In terms of assembly, catalytic component of the tRNA-splicing ligase complex. Requires Mn(2+) as cofactor.

The catalysed reaction is a 3'-end 3'-phospho-ribonucleotide-RNA + a 5'-end dephospho-ribonucleoside-RNA + GTP = a ribonucleotidyl-ribonucleotide-RNA + GMP + diphosphate. It carries out the reaction a 3'-end 2',3'-cyclophospho-ribonucleotide-RNA + a 5'-end dephospho-ribonucleoside-RNA + GTP + H2O = a ribonucleotidyl-ribonucleotide-RNA + GMP + diphosphate + H(+). In terms of biological role, catalytic subunit of the tRNA-splicing ligase complex that acts by directly joining spliced tRNA halves to mature-sized tRNAs by incorporating the precursor-derived splice junction phosphate into the mature tRNA as a canonical 3',5'-phosphodiester. May act as an RNA ligase with broad substrate specificity, and may function toward other RNAs. The polypeptide is RNA-splicing ligase RtcB homolog (Branchiostoma floridae (Florida lancelet)).